The primary structure comprises 1252 residues: Calmodulin-regulated spectrin-associated protein 3 (1252 aa).

Disordered regions lie at residues 183–205, 331–385, 429–457, 479–604, 638–697, 712–935, 962–981, 996–1030, and 1063–1114; these read KTEQ…SPAQ, HAVS…SMSH, SVSS…ESGD, GAAD…MSEL, FLQV…LGDY, QRDM…EAAR, TTRA…GDFT, DLDK…DDSA, and PNNL…TGPR. Thr-184 bears the Phosphothreonine mark. At Ser-193 the chain carries Phosphoserine. In terms of domain architecture, Calponin-homology (CH) spans 203–312; the sequence is PAQPSIRYRK…LVVLLAEMYM (110 aa). Phosphoserine occurs at positions 334, 347, 351, 368, 373, and 382. Residues 335–353 show a composition bias toward polar residues; sequence PRNTETVPSQNNSGSSSPV. Residues 359-373 show a composition bias toward low complexity; that stretch reads PLLSPGGPQSPLRGS. 3 stretches are compositionally biased toward polar residues: residues 374 to 383, 441 to 450, and 525 to 534; these read TGSLKSSPSM, VSTSSRNSAQ, and ENPSKSSPCS. 3 positions are modified to phosphoserine: Ser-548, Ser-555, and Ser-561. The segment covering 569-580 has biased composition (basic and acidic residues); it reads AERKKQLVKAEA. Residues 595 to 629 are a coiled coil; sequence EALSSEMSELGARLEEKRRAIEAQKRRIEAIFAKH. Ser-683 carries the phosphoserine modification. Residues 696–727 are a coiled coil; that stretch reads DYNRAVSKLSAALSSLQRDMQRLTDQQQRLLA. Over residues 729-739 the composition is skewed to pro residues; sequence PEAPGPAPPPA. Low complexity predominate over residues 740–768; the sequence is AWVIPGPATGPKAASPSPARRAPAARRSP. Ser-767 is subject to Phosphoserine. Phosphothreonine is present on Thr-797. A phosphoserine mark is found at Ser-812 and Ser-881. The span at 812–825 shows a compositional bias: polar residues; it reads SPSQVPVQTRSSIL. The span at 887 to 934 shows a compositional bias: basic and acidic residues; the sequence is YKDEDKPEDEMAQKRASLLERQQRRVEEARRRKQWQEAEKEQKREEAA. The stretch at 896–943 forms a coiled coil; sequence EMAQKRASLLERQQRRVEEARRRKQWQEAEKEQKREEAARLAQEAPGL. Ser-1077 carries the post-translational modification Phosphoserine. Positions 1112-1246 constitute a CKK domain; it reads GPRLYKEPSA…QSKKPTTPKK (135 aa).

Belongs to the CAMSAP1 family. Interacts with PLEKHA7. Interacts with CAMSAP2. Interacts with KATNA1 and KATNB1; leading to regulate the length of CAMSAP3-decorated microtubule stretches. Interacts with AKAP9; regulating Golgi assembly in epithelial cells. Interacts with MACF1. Interacts with isoform C of CDH23; leading to inhibit CAMSAP3 ability to induce microtubule bundle formation. Interacts with AKNA. In terms of tissue distribution, expressed at the apical surface of respiratory epithelia, as well as in the acini of submucosal glands (at protein level). In cochlea, restricted to the organ of Corti and increases during development (at protein level). Highly expressed in both sensory hair cells and supporting cells.

The protein localises to the cytoplasm. It is found in the cytoskeleton. It localises to the cell junction. Its subcellular location is the adherens junction. The protein resides in the cilium axoneme. The protein localises to the cilium basal body. Key microtubule-organizing protein that specifically binds the minus-end of non-centrosomal microtubules and regulates their dynamics and organization. Specifically recognizes growing microtubule minus-ends and autonomously decorates and stabilizes microtubule lattice formed by microtubule minus-end polymerization. Acts on free microtubule minus-ends that are not capped by microtubule-nucleating proteins or other factors and protects microtubule minus-ends from depolymerization. In addition, it also reduces the velocity of microtubule polymerization. Required for the biogenesis and the maintenance of zonula adherens by anchoring the minus-end of microtubules to zonula adherens and by recruiting the kinesin KIFC3 to those junctional sites. Required for orienting the apical-to-basal polarity of microtubules in epithelial cells: acts by tethering non-centrosomal microtubules to the apical cortex, leading to their longitudinal orientation. Plays a key role in early embryos, which lack centrosomes: accumulates at the microtubule bridges that connect pairs of cells and enables the formation of a non-centrosomal microtubule-organizing center that directs intracellular transport in the early embryo. Couples non-centrosomal microtubules with actin: interaction with MACF1 at the minus ends of non-centrosomal microtubules, tethers the microtubules to actin filaments, regulating focal adhesion size and cell migration. Plays a key role in the generation of non-centrosomal microtubules by accumulating in the pericentrosomal region and cooperating with KATNA1 to release non-centrosomal microtubules from the centrosome. Through the microtubule cytoskeleton, also regulates the organization of cellular organelles including the Golgi and the early endosomes. Through interaction with AKAP9, involved in translocation of Golgi vesicles in epithelial cells, where microtubules are mainly non-centrosomal. Plays an important role in motile cilia function by facilitatating proper orientation of basal bodies and formation of central microtubule pairs in motile cilia. This Mus musculus (Mouse) protein is Calmodulin-regulated spectrin-associated protein 3.